Consider the following 592-residue polypeptide: Aspartate--tRNA(Asp/Asn) ligase (592 aa).

Glutamate 175 is an L-aspartate binding site. Positions 199–202 (QLFK) are aspartate. Arginine 221 is a binding site for L-aspartate. Residues 221–223 (RDE) and glutamine 230 contribute to the ATP site. An L-aspartate-binding site is contributed by histidine 450. Glutamate 483 is an ATP binding site. Residue arginine 490 participates in L-aspartate binding. ATP is bound at residue 535–538 (GLDR).

This sequence belongs to the class-II aminoacyl-tRNA synthetase family. Type 1 subfamily. Homodimer.

The protein resides in the cytoplasm. The enzyme catalyses tRNA(Asx) + L-aspartate + ATP = L-aspartyl-tRNA(Asx) + AMP + diphosphate. Aspartyl-tRNA synthetase with relaxed tRNA specificity since it is able to aspartylate not only its cognate tRNA(Asp) but also tRNA(Asn). Reaction proceeds in two steps: L-aspartate is first activated by ATP to form Asp-AMP and then transferred to the acceptor end of tRNA(Asp/Asn). This Acinetobacter baumannii (strain AB307-0294) protein is Aspartate--tRNA(Asp/Asn) ligase.